Reading from the N-terminus, the 527-residue chain is Probable malate:quinone oxidoreductase 2 (527 aa).

It belongs to the MQO family. FAD is required as a cofactor.

The enzyme catalyses (S)-malate + a quinone = a quinol + oxaloacetate. The protein operates within carbohydrate metabolism; tricarboxylic acid cycle; oxaloacetate from (S)-malate (quinone route): step 1/1. This Pseudomonas putida (strain ATCC 47054 / DSM 6125 / CFBP 8728 / NCIMB 11950 / KT2440) protein is Probable malate:quinone oxidoreductase 2.